Consider the following 266-residue polypeptide: tRNA pseudouridine synthase A (266 aa).

D57 (nucleophile) is an active-site residue. Y115 serves as a coordination point for substrate.

It belongs to the tRNA pseudouridine synthase TruA family. In terms of assembly, homodimer.

It catalyses the reaction uridine(38/39/40) in tRNA = pseudouridine(38/39/40) in tRNA. Its function is as follows. Formation of pseudouridine at positions 38, 39 and 40 in the anticodon stem and loop of transfer RNAs. This chain is tRNA pseudouridine synthase A, found in Buchnera aphidicola subsp. Acyrthosiphon pisum (strain Tuc7).